The sequence spans 1183 residues: ATP-dependent helicase/nuclease subunit A (1183 aa).

The region spanning Val-3 to Arg-461 is the UvrD-like helicase ATP-binding domain. Residue Ala-24–Thr-31 participates in ATP binding. The region spanning Arg-473–Gly-769 is the UvrD-like helicase C-terminal domain.

Belongs to the helicase family. AddA subfamily. In terms of assembly, heterodimer of AddA and AddB/RexB. It depends on Mg(2+) as a cofactor.

The catalysed reaction is Couples ATP hydrolysis with the unwinding of duplex DNA by translocating in the 3'-5' direction.. The enzyme catalyses ATP + H2O = ADP + phosphate + H(+). Its function is as follows. The heterodimer acts as both an ATP-dependent DNA helicase and an ATP-dependent, dual-direction single-stranded exonuclease. Recognizes the chi site generating a DNA molecule suitable for the initiation of homologous recombination. The AddA nuclease domain is required for chi fragment generation; this subunit has the helicase and 3' -&gt; 5' nuclease activities. The sequence is that of ATP-dependent helicase/nuclease subunit A from Exiguobacterium sibiricum (strain DSM 17290 / CCUG 55495 / CIP 109462 / JCM 13490 / 255-15).